We begin with the raw amino-acid sequence, 310 residues long: DnaJ-like protein MG002 (310 aa).

The J domain maps to M1–V66.

This chain is DnaJ-like protein MG002, found in Mycoplasma genitalium (strain ATCC 33530 / DSM 19775 / NCTC 10195 / G37) (Mycoplasmoides genitalium).